The chain runs to 312 residues: Glyoxylate/hydroxypyruvate reductase A (312 aa).

Arg227 is a catalytic residue. His275 acts as the Proton donor in catalysis.

Belongs to the D-isomer specific 2-hydroxyacid dehydrogenase family. GhrA subfamily.

It localises to the cytoplasm. The enzyme catalyses glycolate + NADP(+) = glyoxylate + NADPH + H(+). The catalysed reaction is (R)-glycerate + NAD(+) = 3-hydroxypyruvate + NADH + H(+). It carries out the reaction (R)-glycerate + NADP(+) = 3-hydroxypyruvate + NADPH + H(+). In terms of biological role, catalyzes the NADPH-dependent reduction of glyoxylate and hydroxypyruvate into glycolate and glycerate, respectively. The polypeptide is Glyoxylate/hydroxypyruvate reductase A (Salmonella enteritidis PT4 (strain P125109)).